A 971-amino-acid polypeptide reads, in one-letter code: Valine--tRNA ligase (971 aa).

Positions 55–65 (PNVTGSLHMGH) match the 'HIGH' region motif. Positions 572–576 (KMSKS) match the 'KMSKS' region motif. Lysine 575 contacts ATP. Positions 906-933 (KAELGRLQKDLDKVQKQHDQIASKLANE) form a coiled coil.

It belongs to the class-I aminoacyl-tRNA synthetase family. ValS type 1 subfamily. In terms of assembly, monomer.

The protein localises to the cytoplasm. The catalysed reaction is tRNA(Val) + L-valine + ATP = L-valyl-tRNA(Val) + AMP + diphosphate. Catalyzes the attachment of valine to tRNA(Val). As ValRS can inadvertently accommodate and process structurally similar amino acids such as threonine, to avoid such errors, it has a 'posttransfer' editing activity that hydrolyzes mischarged Thr-tRNA(Val) in a tRNA-dependent manner. In Acinetobacter baylyi (strain ATCC 33305 / BD413 / ADP1), this protein is Valine--tRNA ligase.